The chain runs to 426 residues: 3-isopropylmalate dehydratase large subunit (426 aa).

Cys307, Cys367, and Cys370 together coordinate [4Fe-4S] cluster.

It belongs to the aconitase/IPM isomerase family. LeuC type 2 subfamily. As to quaternary structure, heterodimer of LeuC and LeuD. The cofactor is [4Fe-4S] cluster.

It carries out the reaction (2R,3S)-3-isopropylmalate = (2S)-2-isopropylmalate. Its pathway is amino-acid biosynthesis; L-leucine biosynthesis; L-leucine from 3-methyl-2-oxobutanoate: step 2/4. Catalyzes the isomerization between 2-isopropylmalate and 3-isopropylmalate, via the formation of 2-isopropylmaleate. In Aliarcobacter butzleri (strain RM4018) (Arcobacter butzleri), this protein is 3-isopropylmalate dehydratase large subunit.